The sequence spans 127 residues: Large ribosomal subunit protein bL17 (127 aa).

The protein belongs to the bacterial ribosomal protein bL17 family. As to quaternary structure, part of the 50S ribosomal subunit. Contacts protein L32.

This Legionella pneumophila (strain Lens) protein is Large ribosomal subunit protein bL17.